Consider the following 420-residue polypeptide: Tyrosine--tRNA ligase 1 (420 aa).

Position 35 (Y35) interacts with L-tyrosine. The 'HIGH' region motif lies at 40-49 (PTAGSLHIGH). Y172 and Q176 together coordinate L-tyrosine. A 'KMSKS' region motif is present at residues 232–236 (KFGKT). An ATP-binding site is contributed by K235. The region spanning 355–419 (INIAELLVKS…GKKQFRLIKL (65 aa)) is the S4 RNA-binding domain.

This sequence belongs to the class-I aminoacyl-tRNA synthetase family. TyrS type 1 subfamily. Homodimer.

It localises to the cytoplasm. The enzyme catalyses tRNA(Tyr) + L-tyrosine + ATP = L-tyrosyl-tRNA(Tyr) + AMP + diphosphate + H(+). Its function is as follows. Catalyzes the attachment of tyrosine to tRNA(Tyr) in a two-step reaction: tyrosine is first activated by ATP to form Tyr-AMP and then transferred to the acceptor end of tRNA(Tyr). The protein is Tyrosine--tRNA ligase 1 of Pseudoalteromonas translucida (strain TAC 125).